The primary structure comprises 302 residues: ATP synthase gamma chain (302 aa).

Belongs to the ATPase gamma chain family. F-type ATPases have 2 components, CF(1) - the catalytic core - and CF(0) - the membrane proton channel. CF(1) has five subunits: alpha(3), beta(3), gamma(1), delta(1), epsilon(1). CF(0) has three main subunits: a, b and c.

The protein resides in the cell inner membrane. In terms of biological role, produces ATP from ADP in the presence of a proton gradient across the membrane. The gamma chain is believed to be important in regulating ATPase activity and the flow of protons through the CF(0) complex. The sequence is that of ATP synthase gamma chain from Bartonella bacilliformis (strain ATCC 35685 / KC583 / Herrer 020/F12,63).